Here is a 471-residue protein sequence, read N- to C-terminus: Extracellular endo-alpha-(1-&gt;5)-L-arabinanase (471 aa).

A signal peptide spans 1 to 19 (MRFLFLMITLTALTGYILA). Asp32 serves as the catalytic Proton acceptor. Substrate-binding positions include Asp32, Gly117, 167–170 (NALD), 187–189 (SWF), and 219–223 (HSSME). Glu223 acts as the Proton donor in catalysis. Ca(2+) is bound at residue His314.

It belongs to the glycosyl hydrolase 43 family. As to quaternary structure, monomer. The cofactor is Ca(2+).

It is found in the secreted. The catalysed reaction is Endohydrolysis of (1-&gt;5)-alpha-arabinofuranosidic linkages in (1-&gt;5)-arabinans.. It participates in glycan metabolism; L-arabinan degradation. In terms of biological role, involved in the degradation of arabinan and is a key enzyme in the complete degradation of the plant cell wall. Catalyzes the internal cleavage of alpha-(1-&gt;5)-L-arabinofuranosyl residues in different arabinan-containing polysaccharides, and releases arabinotriose and arabinobiose as end products. It acts on branched arabinan (from sugar beet), but more slowly when compared to linear or debranched arabinan. The sequence is that of Extracellular endo-alpha-(1-&gt;5)-L-arabinanase from Thermotoga petrophila (strain ATCC BAA-488 / DSM 13995 / JCM 10881 / RKU-1).